The sequence spans 285 residues: Aldo-keto reductase (285 aa).

Ala-165–Lys-175 contributes to the NADP(+) binding site.

It belongs to the aldo/keto reductase family. Aldo/keto reductase 2 subfamily.

In Babesia bovis, this protein is Aldo-keto reductase.